A 299-amino-acid chain; its full sequence is KATNB1-like protein 1 (299 aa).

The Nuclear localization signal motif lies at 8-15 (VKKRNFSN). Serine 56 is subject to Phosphoserine.

As to quaternary structure, interacts with KATNA1 and KATNAL1; these interactions are competed by KATNB1 which has a higher affinity for them.

It is found in the nucleus. The protein localises to the cytoplasm. It localises to the cytoskeleton. Its subcellular location is the spindle pole. Its function is as follows. Regulates microtubule-severing activity of KATNAL1 in a concentration-dependent manner in vitro. This Mus musculus (Mouse) protein is KATNB1-like protein 1 (Katnbl1).